A 95-amino-acid chain; its full sequence is Defensin alpha 4 (95 aa).

An N-terminal signal peptide occupies residues 1–19; the sequence is MRTLALLAAILLVALQAQA. The propeptide occupies 20-62; the sequence is EHISVSIDEVVDQQPPQAEDQDVAIYVKEHESSALEALGVKAG. Disulfide bonds link cysteine 65–cysteine 93, cysteine 67–cysteine 82, and cysteine 72–cysteine 92.

It belongs to the alpha-defensin family.

The protein localises to the secreted. Its function is as follows. Host-defense peptide that has antimicrobial activity. Inhibits corticotropin (ACTH)-stimulated corticosterone production (in vitro). In Oryctolagus cuniculus (Rabbit), this protein is Defensin alpha 4.